Reading from the N-terminus, the 163-residue chain is Auxin-responsive protein IAA5 (163 aa).

The short motif at 15–19 is the EAR-like (transcriptional repression) element; it reads LRLGL. The PB1 domain maps to 74–160; sequence SSYVKVSVDG…KRLRIMKRSC (87 aa).

This sequence belongs to the Aux/IAA family. As to quaternary structure, homodimers and heterodimers. In terms of tissue distribution, highly expressed in stems and flowers.

It localises to the nucleus. Functionally, aux/IAA proteins are short-lived transcriptional factors that function as repressors of early auxin response genes at low auxin concentrations. Repression is thought to result from the interaction with auxin response factors (ARFs), proteins that bind to the auxin-responsive promoter element (AuxRE). Formation of heterodimers with ARF proteins may alter their ability to modulate early auxin response genes expression. This is Auxin-responsive protein IAA5 (IAA5) from Arabidopsis thaliana (Mouse-ear cress).